Here is a 536-residue protein sequence, read N- to C-terminus: Chaperonin GroEL (536 aa).

Residues 29-32, 86-90, Gly413, 476-478, and Asp492 contribute to the ATP site; these read TLGP, DGTTT, and DAA.

The protein belongs to the chaperonin (HSP60) family. As to quaternary structure, forms a cylinder of 14 subunits composed of two heptameric rings stacked back-to-back. Interacts with the co-chaperonin GroES.

The protein localises to the cytoplasm. The catalysed reaction is ATP + H2O + a folded polypeptide = ADP + phosphate + an unfolded polypeptide.. Functionally, together with its co-chaperonin GroES, plays an essential role in assisting protein folding. The GroEL-GroES system forms a nano-cage that allows encapsulation of the non-native substrate proteins and provides a physical environment optimized to promote and accelerate protein folding. The protein is Chaperonin GroEL of Methanococcus vannielii (strain ATCC 35089 / DSM 1224 / JCM 13029 / OCM 148 / SB).